Consider the following 183-residue polypeptide: ATP-dependent protease subunit HslV (183 aa).

Residue threonine 13 is part of the active site. Glycine 168, cysteine 171, and threonine 174 together coordinate Na(+).

This sequence belongs to the peptidase T1B family. HslV subfamily. A double ring-shaped homohexamer of HslV is capped on each side by a ring-shaped HslU homohexamer. The assembly of the HslU/HslV complex is dependent on binding of ATP.

It is found in the cytoplasm. The enzyme catalyses ATP-dependent cleavage of peptide bonds with broad specificity.. Its activity is regulated as follows. Allosterically activated by HslU binding. In terms of biological role, protease subunit of a proteasome-like degradation complex believed to be a general protein degrading machinery. The chain is ATP-dependent protease subunit HslV from Xanthomonas axonopodis pv. citri (strain 306).